The following is a 320-amino-acid chain: Ferrochelatase (320 aa).

The Fe cation site is built by histidine 194 and glutamate 275.

It belongs to the ferrochelatase family. As to quaternary structure, monomer.

It localises to the cytoplasm. The catalysed reaction is heme b + 2 H(+) = protoporphyrin IX + Fe(2+). The protein operates within porphyrin-containing compound metabolism; protoheme biosynthesis; protoheme from protoporphyrin-IX: step 1/1. In terms of biological role, catalyzes the ferrous insertion into protoporphyrin IX. The chain is Ferrochelatase from Shigella boydii serotype 18 (strain CDC 3083-94 / BS512).